Reading from the N-terminus, the 479-residue chain is Aspartyl/glutamyl-tRNA(Asn/Gln) amidotransferase subunit B (479 aa).

Belongs to the GatB/GatE family. GatB subfamily. In terms of assembly, heterotrimer of A, B and C subunits.

It carries out the reaction L-glutamyl-tRNA(Gln) + L-glutamine + ATP + H2O = L-glutaminyl-tRNA(Gln) + L-glutamate + ADP + phosphate + H(+). The catalysed reaction is L-aspartyl-tRNA(Asn) + L-glutamine + ATP + H2O = L-asparaginyl-tRNA(Asn) + L-glutamate + ADP + phosphate + 2 H(+). Its function is as follows. Allows the formation of correctly charged Asn-tRNA(Asn) or Gln-tRNA(Gln) through the transamidation of misacylated Asp-tRNA(Asn) or Glu-tRNA(Gln) in organisms which lack either or both of asparaginyl-tRNA or glutaminyl-tRNA synthetases. The reaction takes place in the presence of glutamine and ATP through an activated phospho-Asp-tRNA(Asn) or phospho-Glu-tRNA(Gln). The protein is Aspartyl/glutamyl-tRNA(Asn/Gln) amidotransferase subunit B of Streptococcus pyogenes serotype M1.